The sequence spans 1298 residues: Ras guanine nucleotide exchange factor Q (1298 aa).

5 disordered regions span residues 1 to 26, 46 to 88, 211 to 271, 314 to 384, and 459 to 533; these read MDIN…INNF, NNNI…SIEG, NISN…GPLK, YTPP…QQQQ, and LSNG…STTT. Composition is skewed to low complexity over residues 211–245 and 315–384; these read NISN…NSNN and TPPS…QQQQ. Positions 352–389 form a coiled coil; it reads SSLNANNNTNNNNQQLQQQQQQQQQQQLQQQQQLTKSY. Over residues 473–482 the composition is skewed to polar residues; sequence LHLSTESTTS. Low complexity-rich tracts occupy residues 483-501 and 508-533; these read NNNN…NNNN and TTNS…STTT. The region spanning 550–689 is the N-terminal Ras-GEF domain; the sequence is DKDEVIAGER…YLKKAINDSG (140 aa). A DEP domain is found at 723–801; the sequence is MSQSLQLKER…SSSSTTTTTT (79 aa). Disordered stretches follow at residues 781–864 and 884–920; these read SKSG…PNSI and GIAN…SNSF. Low complexity predominate over residues 783–864; that stretch reads SGSSFSPSSS…ITSTSLPNSI (82 aa). Residues 964–1193 enclose the Ras-GEF domain; that stretch reads HPVEIARQLT…YKASHMIEQP (230 aa). A disordered region spans residues 1214-1267; the sequence is TTTTTNNLNNNNNNNNPNNNNNNNNNSANNKSSPSPSPSSSPITSSPISSLTIN.

Promotes the exchange of Ras-bound GDP by GTP. Seems to play a role in chemotaxis. In Dictyostelium discoideum (Social amoeba), this protein is Ras guanine nucleotide exchange factor Q (gefQ).